The sequence spans 205 residues: uncharacterized protein (205 aa).

Residues 1 to 63 are Cytoplasmic-facing; it reads MQRTRELESS…QHPKVAKFLK (63 aa). A helical membrane pass occupies residues 64–84; sequence VQLVFDLISLFIFATHQLLLL. Topologically, residues 85–124 are extracellular; it reads EDGNFGKHYFKRKTKRCSKFSCSRCNANAHHPKWFKFKHS. The helical transmembrane segment at 125-145 threads the bilayer; that stretch reads LLCLGTFCFGVYSLVKINKFF. The Cytoplasmic portion of the chain corresponds to 146-205; sequence KTDQTVDLNRLLELFFWQLNAILNMKLFAFYGDHLESHSAPLDVYEDSFANKSSSGGDEV.

The protein resides in the membrane. This is an uncharacterized protein from Saccharomyces cerevisiae (strain ATCC 204508 / S288c) (Baker's yeast).